The sequence spans 600 residues: UvrABC system protein C (600 aa).

One can recognise a GIY-YIG domain in the interval 15–100 (NSTGVYQYFN…IKQLHPKYNI (86 aa)). A UVR domain is found at 203 to 238 (SVLLKNLEKQMLVLAQNENYEEAAKVRDQIAMIKDL).

The protein belongs to the UvrC family. Interacts with UvrB in an incision complex.

The protein resides in the cytoplasm. Its function is as follows. The UvrABC repair system catalyzes the recognition and processing of DNA lesions. UvrC both incises the 5' and 3' sides of the lesion. The N-terminal half is responsible for the 3' incision and the C-terminal half is responsible for the 5' incision. The sequence is that of UvrABC system protein C from Campylobacter jejuni subsp. jejuni serotype O:2 (strain ATCC 700819 / NCTC 11168).